Reading from the N-terminus, the 286-residue chain is Tryptophan 2,3-dioxygenase (286 aa).

Substrate is bound by residues 53–57 (FIVQH), Y115, and R119. H242 contributes to the heme binding site. Position 256 (T256) interacts with substrate.

The protein belongs to the tryptophan 2,3-dioxygenase family. As to quaternary structure, homotetramer. Heme serves as cofactor.

The catalysed reaction is L-tryptophan + O2 = N-formyl-L-kynurenine. Its pathway is amino-acid degradation; L-tryptophan degradation via kynurenine pathway; L-kynurenine from L-tryptophan: step 1/2. In terms of biological role, heme-dependent dioxygenase that catalyzes the oxidative cleavage of the L-tryptophan (L-Trp) pyrrole ring and converts L-tryptophan to N-formyl-L-kynurenine. Catalyzes the oxidative cleavage of the indole moiety. The polypeptide is Tryptophan 2,3-dioxygenase (Kineococcus radiotolerans (strain ATCC BAA-149 / DSM 14245 / SRS30216)).